A 684-amino-acid chain; its full sequence is Glycine--tRNA ligase beta subunit (684 aa).

Belongs to the class-II aminoacyl-tRNA synthetase family. Tetramer of two alpha and two beta subunits.

It localises to the cytoplasm. The enzyme catalyses tRNA(Gly) + glycine + ATP = glycyl-tRNA(Gly) + AMP + diphosphate. In Pseudomonas aeruginosa (strain UCBPP-PA14), this protein is Glycine--tRNA ligase beta subunit.